Consider the following 221-residue polypeptide: Cytidylate kinase (221 aa).

Position 11–19 (11–19 (GPTASGKGT)) interacts with ATP.

The protein belongs to the cytidylate kinase family. Type 1 subfamily.

It localises to the cytoplasm. The enzyme catalyses CMP + ATP = CDP + ADP. It carries out the reaction dCMP + ATP = dCDP + ADP. In Cupriavidus pinatubonensis (strain JMP 134 / LMG 1197) (Cupriavidus necator (strain JMP 134)), this protein is Cytidylate kinase.